Here is a 111-residue protein sequence, read N- to C-terminus: Translation initiation factor 1A 1 (111 aa).

The interval 1 to 28 (MTLADLKKPTSRASPSTEETVTRVRTPR) is disordered. The S1-like domain occupies 22–96 (TRVRTPRREN…EKADVIWKYT (75 aa)).

It belongs to the eIF-1A family.

In terms of biological role, seems to be required for maximal rate of protein biosynthesis. Enhances ribosome dissociation into subunits and stabilizes the binding of the initiator Met-tRNA(I) to 40 S ribosomal subunits. This chain is Translation initiation factor 1A 1 (eIF1A1), found in Methanosarcina mazei (strain ATCC BAA-159 / DSM 3647 / Goe1 / Go1 / JCM 11833 / OCM 88) (Methanosarcina frisia).